A 580-amino-acid polypeptide reads, in one-letter code: Formate--tetrahydrofolate ligase (580 aa).

Residue 65-72 (TPHGEGKT) participates in ATP binding.

Belongs to the formate--tetrahydrofolate ligase family.

The catalysed reaction is (6S)-5,6,7,8-tetrahydrofolate + formate + ATP = (6R)-10-formyltetrahydrofolate + ADP + phosphate. Its pathway is one-carbon metabolism; tetrahydrofolate interconversion. This Shewanella baltica (strain OS223) protein is Formate--tetrahydrofolate ligase.